A 460-amino-acid chain; its full sequence is Putative RNA-guided DNA endonuclease MT2953 (460 aa).

Active-site residues include Asp-224 and Glu-313. Positions 372, 375, 389, and 392 each coordinate Zn(2+). Asp-399 is a catalytic residue. The disordered stretch occupies residues 415–460; that stretch reads VVGPVGAAVKRGADRKTGPGPAGGREARKATGHPAGEQPRDGVQVK.

It in the N-terminal section; belongs to the transposase 2 family. In the C-terminal section; belongs to the transposase 35 family.

Functionally, an RNA-guided dsDNA endonuclease. When guided by an RNA derived from the right-end element of its insertion sequence element (IS), cleaves DNA downstream of the transposon-associated motif (TAM). Cleaves supercoiled and linear DNA in a staggered manner 15-21 bases from the TAM yielding 5'-overhangs. Binds reRNA, an approximately 150 nucleotide base sRNA derived from the 3' end of its own gene, the right end (RE) of the insertion sequence (IS) plus sequence downstream of the IS. This Mycobacterium tuberculosis (strain CDC 1551 / Oshkosh) protein is Putative RNA-guided DNA endonuclease MT2953.